The primary structure comprises 269 residues: 4-hydroxy-tetrahydrodipicolinate reductase (269 aa).

Residues 13–18 and D39 contribute to the NAD(+) site; that span reads GASGRM. NADP(+) is bound at residue R40. NAD(+) contacts are provided by residues 101–103 and 125–128; these read GTT and APNM. Residue H158 is the Proton donor/acceptor of the active site. Position 159 (H159) interacts with (S)-2,3,4,5-tetrahydrodipicolinate. Residue K162 is the Proton donor of the active site. 168–169 provides a ligand contact to (S)-2,3,4,5-tetrahydrodipicolinate; it reads GT.

This sequence belongs to the DapB family.

It is found in the cytoplasm. It carries out the reaction (S)-2,3,4,5-tetrahydrodipicolinate + NAD(+) + H2O = (2S,4S)-4-hydroxy-2,3,4,5-tetrahydrodipicolinate + NADH + H(+). It catalyses the reaction (S)-2,3,4,5-tetrahydrodipicolinate + NADP(+) + H2O = (2S,4S)-4-hydroxy-2,3,4,5-tetrahydrodipicolinate + NADPH + H(+). The protein operates within amino-acid biosynthesis; L-lysine biosynthesis via DAP pathway; (S)-tetrahydrodipicolinate from L-aspartate: step 4/4. Its function is as follows. Catalyzes the conversion of 4-hydroxy-tetrahydrodipicolinate (HTPA) to tetrahydrodipicolinate. This chain is 4-hydroxy-tetrahydrodipicolinate reductase, found in Bordetella bronchiseptica (strain ATCC BAA-588 / NCTC 13252 / RB50) (Alcaligenes bronchisepticus).